A 479-amino-acid chain; its full sequence is ATP synthase subunit beta (479 aa).

An ATP-binding site is contributed by 153–160 (GGAGVGKT).

This sequence belongs to the ATPase alpha/beta chains family. F-type ATPases have 2 components, CF(1) - the catalytic core - and CF(0) - the membrane proton channel. CF(1) has five subunits: alpha(3), beta(3), gamma(1), delta(1), epsilon(1). CF(0) has three main subunits: a(1), b(2) and c(9-12). The alpha and beta chains form an alternating ring which encloses part of the gamma chain. CF(1) is attached to CF(0) by a central stalk formed by the gamma and epsilon chains, while a peripheral stalk is formed by the delta and b chains.

It is found in the cell membrane. The catalysed reaction is ATP + H2O + 4 H(+)(in) = ADP + phosphate + 5 H(+)(out). Functionally, produces ATP from ADP in the presence of a proton gradient across the membrane. The catalytic sites are hosted primarily by the beta subunits. This chain is ATP synthase subunit beta, found in Lactobacillus delbrueckii subsp. bulgaricus (strain ATCC BAA-365 / Lb-18).